The following is a 320-amino-acid chain: tRNA N6-adenosine threonylcarbamoyltransferase (320 aa).

Residues H114 and H118 each contribute to the Fe cation site. Residues 136 to 140, D169, G182, D186, and N273 each bind substrate; that span reads VVSGG. Position 297 (D297) interacts with Fe cation.

It belongs to the KAE1 / TsaD family. Requires Fe(2+) as cofactor.

The protein localises to the cytoplasm. The catalysed reaction is L-threonylcarbamoyladenylate + adenosine(37) in tRNA = N(6)-L-threonylcarbamoyladenosine(37) in tRNA + AMP + H(+). Its function is as follows. Required for the formation of a threonylcarbamoyl group on adenosine at position 37 (t(6)A37) in tRNAs that read codons beginning with adenine. Is involved in the transfer of the threonylcarbamoyl moiety of threonylcarbamoyl-AMP (TC-AMP) to the N6 group of A37, together with TsaE and TsaB. TsaD likely plays a direct catalytic role in this reaction. The chain is tRNA N6-adenosine threonylcarbamoyltransferase from Ureaplasma urealyticum serovar 10 (strain ATCC 33699 / Western).